A 305-amino-acid polypeptide reads, in one-letter code: UDP-3-O-acyl-N-acetylglucosamine deacetylase (305 aa).

The Zn(2+) site is built by H79, H238, and D242. The active-site Proton donor is H265.

The protein belongs to the LpxC family. The cofactor is Zn(2+).

It catalyses the reaction a UDP-3-O-[(3R)-3-hydroxyacyl]-N-acetyl-alpha-D-glucosamine + H2O = a UDP-3-O-[(3R)-3-hydroxyacyl]-alpha-D-glucosamine + acetate. It functions in the pathway glycolipid biosynthesis; lipid IV(A) biosynthesis; lipid IV(A) from (3R)-3-hydroxytetradecanoyl-[acyl-carrier-protein] and UDP-N-acetyl-alpha-D-glucosamine: step 2/6. In terms of biological role, catalyzes the hydrolysis of UDP-3-O-myristoyl-N-acetylglucosamine to form UDP-3-O-myristoylglucosamine and acetate, the committed step in lipid A biosynthesis. The protein is UDP-3-O-acyl-N-acetylglucosamine deacetylase of Salmonella arizonae (strain ATCC BAA-731 / CDC346-86 / RSK2980).